The primary structure comprises 55 residues: Large ribosomal subunit protein bL33 (55 aa).

This sequence belongs to the bacterial ribosomal protein bL33 family.

The protein is Large ribosomal subunit protein bL33 of Bradyrhizobium diazoefficiens (strain JCM 10833 / BCRC 13528 / IAM 13628 / NBRC 14792 / USDA 110).